We begin with the raw amino-acid sequence, 144 residues long: D-aminoacyl-tRNA deacylase (144 aa).

The Gly-cisPro motif, important for rejection of L-amino acids signature appears at 136–137; sequence GP.

It belongs to the DTD family. In terms of assembly, homodimer.

The protein localises to the cytoplasm. It catalyses the reaction glycyl-tRNA(Ala) + H2O = tRNA(Ala) + glycine + H(+). The enzyme catalyses a D-aminoacyl-tRNA + H2O = a tRNA + a D-alpha-amino acid + H(+). Functionally, an aminoacyl-tRNA editing enzyme that deacylates mischarged D-aminoacyl-tRNAs. Also deacylates mischarged glycyl-tRNA(Ala), protecting cells against glycine mischarging by AlaRS. Acts via tRNA-based rather than protein-based catalysis; rejects L-amino acids rather than detecting D-amino acids in the active site. By recycling D-aminoacyl-tRNA to D-amino acids and free tRNA molecules, this enzyme counteracts the toxicity associated with the formation of D-aminoacyl-tRNA entities in vivo and helps enforce protein L-homochirality. This is D-aminoacyl-tRNA deacylase from Vibrio parahaemolyticus serotype O3:K6 (strain RIMD 2210633).